A 1033-amino-acid polypeptide reads, in one-letter code: Error-prone DNA polymerase (1033 aa).

This sequence belongs to the DNA polymerase type-C family. DnaE2 subfamily.

It localises to the cytoplasm. It carries out the reaction DNA(n) + a 2'-deoxyribonucleoside 5'-triphosphate = DNA(n+1) + diphosphate. In terms of biological role, DNA polymerase involved in damage-induced mutagenesis and translesion synthesis (TLS). It is not the major replicative DNA polymerase. This chain is Error-prone DNA polymerase, found in Teredinibacter turnerae (strain ATCC 39867 / T7901).